Here is a 630-residue protein sequence, read N- to C-terminus: PAN2-PAN3 deadenylation complex subunit PAN3 (630 aa).

A C3H1-type zinc finger spans residues 7-36; the sequence is SAKDTLCKNILIYGYCKFENKGCAFSHHKP. Disordered regions lie at residues 38–72 and 135–171; these read VGQP…PSFQ and GFGS…QSSG. Residues 44-56 are compositionally biased toward low complexity; the sequence is SASSSSGYSGNSS. Residues 140-149 show a composition bias toward polar residues; it reads YPSSPNTSGA. Positions 231 to 501 are pseudokinase domain; it reads QTLPRSNLPE…LDRFSQRYLT (271 aa). ATP contacts are provided by residues Arg283, 333–340, and 388–389; these read DYFPNSST and TK. A coiled-coil region spans residues 502–540; the sequence is TRLFSTINNLEDSTDFMESQITTELENARLFRLLTKLNF. The interval 541–630 is knob domain; sequence IIDRPEAKDW…DSVFRNLTRD (90 aa).

Belongs to the protein kinase superfamily. PAN3 family. Homodimer. Forms a heterotrimer with a catalytic subunit PAN2 to form the poly(A)-nuclease (PAN) deadenylation complex. Interacts (via PAM-2 motif) with poly(A)-binding protein PAB1 (via PABC domain), conferring substrate specificity of the enzyme complex.

The protein resides in the cytoplasm. Its function is as follows. Regulatory subunit of the poly(A)-nuclease (PAN) deadenylation complex, one of two cytoplasmic mRNA deadenylases involved in mRNA turnover. PAN specifically shortens poly(A) tails of RNA and the activity is stimulated by poly(A)-binding protein PAB1. PAN deadenylation is followed by rapid degradation of the shortened mRNA tails by the CCR4-NOT complex. Deadenylated mRNAs are then degraded by two alternative mechanisms, namely exosome-mediated 3'-5' exonucleolytic degradation, or deadenylation-dependent mRNA decaping and subsequent 5'-3' exonucleolytic degradation by XRN1. May also be involved in post-transcriptional maturation of mRNA poly(A) tails. PAN3 acts as a positive regulator for PAN activity, recruiting the catalytic subunit PAN2 to mRNA via its interaction with RNA and with PAB1. This is PAN2-PAN3 deadenylation complex subunit PAN3 from Scheffersomyces stipitis (strain ATCC 58785 / CBS 6054 / NBRC 10063 / NRRL Y-11545) (Yeast).